Consider the following 311-residue polypeptide: MTDLIGFYSDHKIAAPLAIAQRSAKFKPFAAEIARRGILQIATCARLEFYGEKSVLEDIDGKPFFGFSYGRVEGAISIAERLATIAAGVHSQILGEGFISGQLMQAIESGDPNLSIFKVARVAVDLGSAARKRQEFFAEFDYVQIVEDIIADRFSDKAPLDRIYIIGAGMLGQELIRGNVGERFRSTVVITRNPKKLRKRLNTGPKTNVTFMRPSEVGRTREPGSMVVIATTDVDNKYKAILQETLLRLGPRIILDLSSIPVLTREAIGELDYVNMYGDEFLRFIEQNNQRLAPKLPLVVSDIKAALGAAV.

In terms of biological role, responsible for the nodulation efficiency and competitive ability of strain GR4 on alfalfa roots. The polypeptide is Protein nfe2 (nfe2) (Rhizobium meliloti (Ensifer meliloti)).